The chain runs to 314 residues: Ribosomal RNA small subunit methyltransferase H (314 aa).

S-adenosyl-L-methionine contacts are provided by residues 34-36 (GGH), D54, F83, D104, and Q111.

The protein belongs to the methyltransferase superfamily. RsmH family.

The protein resides in the cytoplasm. The catalysed reaction is cytidine(1402) in 16S rRNA + S-adenosyl-L-methionine = N(4)-methylcytidine(1402) in 16S rRNA + S-adenosyl-L-homocysteine + H(+). Specifically methylates the N4 position of cytidine in position 1402 (C1402) of 16S rRNA. The protein is Ribosomal RNA small subunit methyltransferase H of Ligilactobacillus salivarius (strain UCC118) (Lactobacillus salivarius).